Here is a 488-residue protein sequence, read N- to C-terminus: UDP-glycosyltransferase 92A1 (488 aa).

UDP-alpha-D-glucose contacts are provided by residues Ser292, 358 to 360 (APQ), 375 to 383 (HCGWNSILE), and 397 to 400 (AAEQ).

It belongs to the UDP-glycosyltransferase family.

This Arabidopsis thaliana (Mouse-ear cress) protein is UDP-glycosyltransferase 92A1 (UGT92A1).